The following is a 196-amino-acid chain: Molybdenum cofactor guanylyltransferase (196 aa).

GTP-binding positions include 10–12 (LAG), K23, N51, D69, and D99. D99 serves as a coordination point for Mg(2+).

The protein belongs to the MobA family. Monomer. Mg(2+) serves as cofactor.

It localises to the cytoplasm. It catalyses the reaction Mo-molybdopterin + GTP + H(+) = Mo-molybdopterin guanine dinucleotide + diphosphate. Functionally, transfers a GMP moiety from GTP to Mo-molybdopterin (Mo-MPT) cofactor (Moco or molybdenum cofactor) to form Mo-molybdopterin guanine dinucleotide (Mo-MGD) cofactor. This Shewanella amazonensis (strain ATCC BAA-1098 / SB2B) protein is Molybdenum cofactor guanylyltransferase.